A 249-amino-acid polypeptide reads, in one-letter code: Esterase YjfP (249 aa).

In terms of biological role, displays esterase activity toward palmitoyl-CoA and pNP-butyrate. This is Esterase YjfP (yjfP) from Escherichia coli (strain K12).